Reading from the N-terminus, the 345-residue chain is D-fructose 1,6-bisphosphatase class 2/sedoheptulose 1,7-bisphosphatase (345 aa).

Residues D33, E57, D97, and E100 each contribute to the Mn(2+) site. Substrate-binding positions include 100 to 102, Y131, 176 to 178, and 198 to 200; these read EGT, RDR, and DGD. E225 is a binding site for Mn(2+).

The protein belongs to the FBPase class 2 family. In terms of assembly, homotetramer. Mn(2+) serves as cofactor.

The catalysed reaction is beta-D-fructose 1,6-bisphosphate + H2O = beta-D-fructose 6-phosphate + phosphate. It carries out the reaction D-sedoheptulose 1,7-bisphosphate + H2O = D-sedoheptulose 7-phosphate + phosphate. The protein operates within carbohydrate biosynthesis; Calvin cycle. Catalyzes the hydrolysis of fructose 1,6-bisphosphate (Fru 1,6-P2) and sedoheptulose 1,7-bisphosphate (Sed 1,7-P2) to fructose 6-phosphate and sedoheptulose 7-phosphate, respectively. In Nostoc sp. (strain PCC 7120 / SAG 25.82 / UTEX 2576), this protein is D-fructose 1,6-bisphosphatase class 2/sedoheptulose 1,7-bisphosphatase.